The following is a 585-amino-acid chain: Arginine--tRNA ligase (585 aa).

Residues 131–141 (ANPTGPMHVGH) carry the 'HIGH' region motif.

Belongs to the class-I aminoacyl-tRNA synthetase family. In terms of assembly, monomer.

Its subcellular location is the cytoplasm. It carries out the reaction tRNA(Arg) + L-arginine + ATP = L-arginyl-tRNA(Arg) + AMP + diphosphate. This Chelativorans sp. (strain BNC1) protein is Arginine--tRNA ligase.